Here is a 660-residue protein sequence, read N- to C-terminus: DNA mismatch repair protein MutL (660 aa).

2 disordered regions span residues 368–426 (PQQT…PTKK) and 439–461 (NREQ…STQQ). Residues 406–417 (SSSSNSTAPSRS) are compositionally biased toward low complexity.

It belongs to the DNA mismatch repair MutL/HexB family.

Functionally, this protein is involved in the repair of mismatches in DNA. It is required for dam-dependent methyl-directed DNA mismatch repair. May act as a 'molecular matchmaker', a protein that promotes the formation of a stable complex between two or more DNA-binding proteins in an ATP-dependent manner without itself being part of a final effector complex. This is DNA mismatch repair protein MutL from Aliivibrio fischeri (strain ATCC 700601 / ES114) (Vibrio fischeri).